The following is a 69-amino-acid chain: Conotoxin Lp3.1 (69 aa).

An N-terminal signal peptide occupies residues 1 to 20 (MLKMGVLLFIFLVLFPLTTL). Residues 21 to 54 (ELDTDRPVERHAAIKQDLKPQERRGIRLHAPRDE) constitute a propeptide that is removed on maturation. Disulfide bonds link Cys55–Cys67, Cys56–Cys65, and Cys61–Cys68.

It belongs to the conotoxin M superfamily. Expressed by the venom duct.

It is found in the secreted. This Conus leopardus (Leopard cone) protein is Conotoxin Lp3.1.